A 234-amino-acid chain; its full sequence is Core atranone cluster (CAC) protein 1 (234 aa).

The protein operates within mycotoxin biosynthesis. In terms of biological role, part of the core atranone cluster (CAC) which products are predicted to catalyze most or all steps of mycotoxin atranone synthesis, starting from geranylgeranyl pyrophosphate (GGPP). The initial cyclization of GGPP to dolabellane is probably performed by the terpene cyclase ATR13. The Baeyer-Villiger oxidation near the end of the atranone synthesis, which converts atranones D and E to atranones F and G is predicted to be catalyzed by the monooxygenase ATR8. Of the CAC's other predicted gene products, the reducing PKS ATR6 might synthesize a polyketide chain. This polyketide is probably transferred onto the atranone backbone by the polyketide transferase ATR5. Other predicted CAC products include 4 oxygenases (ATR2, ATR3, ATR4, and ATR14), 3 short-chain reductases (ATR7, ATR9, and ATR10), and a methyltransferase (ATR12). These may all be involved in the various steps of atranone biosynthesis, although their specific roles must await experimental determination. In Stachybotrys chlorohalonatus (strain IBT 40285), this protein is Core atranone cluster (CAC) protein 1.